The chain runs to 122 residues: Large ribosomal subunit protein uL14 (122 aa).

This sequence belongs to the universal ribosomal protein uL14 family. As to quaternary structure, part of the 50S ribosomal subunit. Forms a cluster with proteins L3 and L19. In the 70S ribosome, L14 and L19 interact and together make contacts with the 16S rRNA in bridges B5 and B8.

Binds to 23S rRNA. Forms part of two intersubunit bridges in the 70S ribosome. The protein is Large ribosomal subunit protein uL14 of Campylobacter jejuni subsp. jejuni serotype O:6 (strain 81116 / NCTC 11828).